The sequence spans 206 residues: Thiamine-phosphate synthase (206 aa).

4-amino-2-methyl-5-(diphosphooxymethyl)pyrimidine is bound by residues 36 to 40 (QLRAK) and Asn-68. The Mg(2+) site is built by Asp-69 and Asp-88. 4-amino-2-methyl-5-(diphosphooxymethyl)pyrimidine is bound at residue Ser-105. 131–133 (TPT) contacts 2-[(2R,5Z)-2-carboxy-4-methylthiazol-5(2H)-ylidene]ethyl phosphate. Lys-134 contacts 4-amino-2-methyl-5-(diphosphooxymethyl)pyrimidine. Gly-162 contacts 2-[(2R,5Z)-2-carboxy-4-methylthiazol-5(2H)-ylidene]ethyl phosphate.

It belongs to the thiamine-phosphate synthase family. Mg(2+) is required as a cofactor.

The catalysed reaction is 2-[(2R,5Z)-2-carboxy-4-methylthiazol-5(2H)-ylidene]ethyl phosphate + 4-amino-2-methyl-5-(diphosphooxymethyl)pyrimidine + 2 H(+) = thiamine phosphate + CO2 + diphosphate. The enzyme catalyses 2-(2-carboxy-4-methylthiazol-5-yl)ethyl phosphate + 4-amino-2-methyl-5-(diphosphooxymethyl)pyrimidine + 2 H(+) = thiamine phosphate + CO2 + diphosphate. It carries out the reaction 4-methyl-5-(2-phosphooxyethyl)-thiazole + 4-amino-2-methyl-5-(diphosphooxymethyl)pyrimidine + H(+) = thiamine phosphate + diphosphate. Its pathway is cofactor biosynthesis; thiamine diphosphate biosynthesis; thiamine phosphate from 4-amino-2-methyl-5-diphosphomethylpyrimidine and 4-methyl-5-(2-phosphoethyl)-thiazole: step 1/1. Functionally, condenses 4-methyl-5-(beta-hydroxyethyl)thiazole monophosphate (THZ-P) and 2-methyl-4-amino-5-hydroxymethyl pyrimidine pyrophosphate (HMP-PP) to form thiamine monophosphate (TMP). The sequence is that of Thiamine-phosphate synthase from Thermus thermophilus (strain ATCC BAA-163 / DSM 7039 / HB27).